The primary structure comprises 152 residues: Gamma-glutamylaminecyclotransferase C (152 aa).

9 to 12 contributes to the substrate binding site; it reads YGSL. The Proton acceptor role is filled by E84.

The protein belongs to the gamma-glutamylcyclotransferase family.

It carries out the reaction epsilon-(gamma-L-glutamyl)-L-lysine = 5-oxo-L-proline + L-lysine. Its function is as follows. May contribute to degradation of proteins cross-linked by transglutaminases by degrading the cross-link between a lysine and a glutamic acid residue. Catalyzes the formation of 5-oxo-L-proline from L-gamma-glutamyl-L-epsilon-lysine. In Danio rerio (Zebrafish), this protein is Gamma-glutamylaminecyclotransferase C (ggact.3).